Here is a 186-residue protein sequence, read N- to C-terminus: Small ribosomal subunit protein uS19 (186 aa).

The interval 1 to 95 (MREAIKRYGS…YEELYAQYKQ (95 aa)) is unknown. Residues 96–186 (MTEKKAYVDP…EKTAKVVKKK (91 aa)) form a small ribosomal subunit protein uS19 region.

The protein belongs to the universal ribosomal protein uS19 family.

Functionally, protein S19 forms a complex with S13 that binds strongly to the 16S ribosomal RNA. This chain is Small ribosomal subunit protein uS19, found in Aquifex aeolicus (strain VF5).